The following is a 153-amino-acid chain: Ribosomal RNA large subunit methyltransferase H (153 aa).

S-adenosyl-L-methionine-binding positions include leucine 75, glycine 102, and 121–126 (LSPLTM).

Belongs to the RNA methyltransferase RlmH family. Homodimer.

The protein localises to the cytoplasm. It carries out the reaction pseudouridine(1915) in 23S rRNA + S-adenosyl-L-methionine = N(3)-methylpseudouridine(1915) in 23S rRNA + S-adenosyl-L-homocysteine + H(+). In terms of biological role, specifically methylates the pseudouridine at position 1915 (m3Psi1915) in 23S rRNA. The protein is Ribosomal RNA large subunit methyltransferase H of Nitratiruptor sp. (strain SB155-2).